Here is a 704-residue protein sequence, read N- to C-terminus: Polyribonucleotide nucleotidyltransferase (704 aa).

Positions 487 and 493 each coordinate Mg(2+). Positions 554 to 613 constitute a KH domain; the sequence is PRLLTIKIHPDKIREVIGKGGSTIQAITKETGTQIDIQDDGTIIIASVNAIAAQAAKSRI. An S1 motif domain is found at 623–691; that stretch reads GRIYEGKVAK…KQGRIRLSIK (69 aa).

Belongs to the polyribonucleotide nucleotidyltransferase family. As to quaternary structure, component of the RNA degradosome, which is a multiprotein complex involved in RNA processing and mRNA degradation. Mg(2+) serves as cofactor.

Its subcellular location is the cytoplasm. The enzyme catalyses RNA(n+1) + phosphate = RNA(n) + a ribonucleoside 5'-diphosphate. In terms of biological role, involved in mRNA degradation. Catalyzes the phosphorolysis of single-stranded polyribonucleotides processively in the 3'- to 5'-direction. In Xanthomonas euvesicatoria pv. vesicatoria (strain 85-10) (Xanthomonas campestris pv. vesicatoria), this protein is Polyribonucleotide nucleotidyltransferase.